The sequence spans 97 residues: MHRKNLLNIGFGNRIVAEDIIAVVSPASAPVKRMKDEAKKAGRLVDATQGRKTRSVIVMASNHVILSAIHTETISQRFAAINGNRLGPDDDPDLMPE.

It belongs to the RemA family.

This chain is Putative regulatory protein Dole_1911, found in Desulfosudis oleivorans (strain DSM 6200 / JCM 39069 / Hxd3) (Desulfococcus oleovorans).